Reading from the N-terminus, the 132-residue chain is Small ribosomal subunit protein uS8 (132 aa).

Belongs to the universal ribosomal protein uS8 family. As to quaternary structure, part of the 30S ribosomal subunit. Contacts proteins S5 and S12.

One of the primary rRNA binding proteins, it binds directly to 16S rRNA central domain where it helps coordinate assembly of the platform of the 30S subunit. This chain is Small ribosomal subunit protein uS8, found in Leuconostoc citreum (strain KM20).